A 382-amino-acid chain; its full sequence is Alkanesulfonate monooxygenase (382 aa).

It belongs to the SsuD family. In terms of assembly, homotetramer.

It catalyses the reaction an alkanesulfonate + FMNH2 + O2 = an aldehyde + FMN + sulfite + H2O + 2 H(+). Functionally, catalyzes the desulfonation of aliphatic sulfonates. The chain is Alkanesulfonate monooxygenase from Yersinia pseudotuberculosis serotype O:1b (strain IP 31758).